A 185-amino-acid chain; its full sequence is Photosystem I assembly protein Ycf4 (185 aa).

2 consecutive transmembrane segments (helical) span residues 24–44 and 66–86; these read YIIGGMLTIGGIGFLLASISS and IIMGAYGVIANLLNFYLWYLV.

It belongs to the Ycf4 family.

The protein resides in the cellular thylakoid membrane. Seems to be required for the assembly of the photosystem I complex. The chain is Photosystem I assembly protein Ycf4 from Prochlorococcus marinus (strain AS9601).